The primary structure comprises 71 residues: Long neurotoxin 3 (71 aa).

5 disulfide bridges follow: cysteine 3-cysteine 20, cysteine 14-cysteine 41, cysteine 26-cysteine 30, cysteine 45-cysteine 56, and cysteine 57-cysteine 62.

This sequence belongs to the three-finger toxin family. Long-chain subfamily. Type II alpha-neurotoxin sub-subfamily. Expressed by the venom gland.

It localises to the secreted. Binds with high affinity to muscular (alpha-1/CHRNA1) and neuronal (alpha-7/CHRNA7) nicotinic acetylcholine receptor (nAChR) and inhibits acetylcholine from binding to the receptor, thereby impairing neuromuscular and neuronal transmission. The chain is Long neurotoxin 3 from Naja naja (Indian cobra).